The sequence spans 87 residues: Protein moa-2 (87 aa).

The tract at residues 23 to 87 (GTAMRHEPSR…VWTASREESS (65 aa)) is disordered. Composition is skewed to basic and acidic residues over residues 26–39 (MRHE…ESAP) and 50–63 (RNEH…EREP).

The protein is Protein moa-2 of Caenorhabditis elegans.